A 247-amino-acid polypeptide reads, in one-letter code: Probable transcriptional regulatory protein Dalk_2958 (247 aa).

Belongs to the TACO1 family.

It localises to the cytoplasm. In Desulfatibacillum aliphaticivorans, this protein is Probable transcriptional regulatory protein Dalk_2958.